The sequence spans 202 residues: Outer-membrane lipoprotein LolB (202 aa).

The signal sequence occupies residues methionine 1–glycine 18. The N-palmitoyl cysteine moiety is linked to residue cysteine 19. Cysteine 19 carries S-diacylglycerol cysteine lipidation.

The protein belongs to the LolB family. In terms of assembly, monomer.

The protein resides in the cell outer membrane. Functionally, plays a critical role in the incorporation of lipoproteins in the outer membrane after they are released by the LolA protein. The sequence is that of Outer-membrane lipoprotein LolB from Vibrio vulnificus (strain YJ016).